We begin with the raw amino-acid sequence, 329 residues long: Glycerol-3-phosphate dehydrogenase [NAD(P)+] (329 aa).

Residues Ser10, Trp11, Arg31, and Lys105 each contribute to the NADPH site. Sn-glycerol 3-phosphate contacts are provided by Lys105, Gly134, and Ser136. Residue Ala138 coordinates NADPH. Residues Lys189, Asp242, Ser252, Arg253, and Asn254 each contribute to the sn-glycerol 3-phosphate site. The Proton acceptor role is filled by Lys189. Arg253 serves as a coordination point for NADPH. Positions 277 and 279 each coordinate NADPH.

The protein belongs to the NAD-dependent glycerol-3-phosphate dehydrogenase family.

The protein resides in the cytoplasm. It catalyses the reaction sn-glycerol 3-phosphate + NAD(+) = dihydroxyacetone phosphate + NADH + H(+). It carries out the reaction sn-glycerol 3-phosphate + NADP(+) = dihydroxyacetone phosphate + NADPH + H(+). The protein operates within membrane lipid metabolism; glycerophospholipid metabolism. In terms of biological role, catalyzes the reduction of the glycolytic intermediate dihydroxyacetone phosphate (DHAP) to sn-glycerol 3-phosphate (G3P), the key precursor for phospholipid synthesis. The polypeptide is Glycerol-3-phosphate dehydrogenase [NAD(P)+] (Neisseria meningitidis serogroup C (strain 053442)).